The sequence spans 314 residues: MKRRRRWRGWLLFPALCFCLLCEAVETNATTVTSTTAAAATTNTTVATTGTTTTSPNVTSTTSNTVTTPTTVSSVSNLTSSTTSIPISTSTVSGTRNTGNNNTTTIGTNATSPSPSVSILTTVTPAATSTISVDGVVTASDYTPTFDDLENITTTRAPTRPPAQDLCSHNLSIILYEEESQSSVDIAVDEEEPELEDDDEYDELWFPLYFEAECNRNYTLHVNHSCDYSVRQSSVSFPPWRDIDSVTFVPRNLSNCSAHGLAVIVAGNQTWYVNPFSLAHLLDAIYNVLGIEDLSANFRRQLAPYRHTLIVPQT.

An N-terminal signal peptide occupies residues 1–24 (MKRRRRWRGWLLFPALCFCLLCEA). Residues N28, N43, N57, N77, N101, N102, N109, N151, N170, N217, N223, N252, N255, and N268 are each glycosylated (N-linked (GlcNAc...) asparagine; by host). Over residues 47 to 114 (ATTGTTTTSP…TIGTNATSPS (68 aa)) the composition is skewed to low complexity. The interval 47-116 (ATTGTTTTSP…GTNATSPSPS (70 aa)) is disordered.

The protein belongs to the HHV-5 UL116 protein family. Interacts with gH. Interacts with UL148. Post-translationally, highly glycosylated.

It localises to the virion. The protein resides in the host endoplasmic reticulum. Its function is as follows. Chaperone protein that cooperates with UL148 to regulate the abundance of gH complexes in virion. First interactor of gH in the host endoplasmic reticulum, regulates the early folding steps of virion assembly. Then, UL148 is recruited and favors the binding of gL. This is an uncharacterized protein from Homo sapiens (Human).